A 255-amino-acid polypeptide reads, in one-letter code: Large ribosomal subunit protein uL6m (255 aa).

The tract at residues Ala-39–Ile-61 is disordered.

It belongs to the universal ribosomal protein uL6 family. As to quaternary structure, component of the mitochondrial large ribosomal subunit (mt-LSU). Mature N.crassa 74S mitochondrial ribosomes consist of a small (37S) and a large (54S) subunit. The 37S small subunit contains a 16S ribosomal RNA (16S mt-rRNA) and 32 different proteins. The 54S large subunit contains a 23S rRNA (23S mt-rRNA) and 42 different proteins.

The protein localises to the mitochondrion. Its function is as follows. Component of the mitochondrial ribosome (mitoribosome), a dedicated translation machinery responsible for the synthesis of mitochondrial genome-encoded proteins, including at least some of the essential transmembrane subunits of the mitochondrial respiratory chain. The mitoribosomes are attached to the mitochondrial inner membrane and translation products are cotranslationally integrated into the membrane. The chain is Large ribosomal subunit protein uL6m (mrpl6) from Neurospora crassa (strain ATCC 24698 / 74-OR23-1A / CBS 708.71 / DSM 1257 / FGSC 987).